The following is a 457-amino-acid chain: MQKYISEARQLLALAIPVILAQIAQTAMGFVDTVMAGGYSATDMAAVAIGTSIWLPAILFGHGLLLALTPVIAQLNGSGRRERIAHQVRQGFWLAGCVSVLIMFVLWNAGYIIRSMHNIDPALADKAVGYLRALLWGAPGYLFFQVARNQCEGLAKTKPGMVIGFLGLLVNIPVNYIFIYGHFGMPELGGVGCGVATAAVYWVMFIAMASYVKRARSMRDIRNERGFSKPDTAVMKRLVQLGLPIALALFFEVTLFAVVALLVSPLGIVDVAGHQIALNFSSLMFVLPMSLAAAVTIRVGYRLGQGSTLDAQTAARTGLGVGVCMAVITAIFTVTLREPIALLYNDNPEVVTLAAQLMLLAAVYQISDSIQVIGSGILRGYKDTRSIFFITFTAYWVLGLPSGYILALTDLVVDRMGPAGFWMGFIIGLTSAAIMMMLRMRYLQRQSSAIILQRAAR.

Helical transmembrane passes span 11–31 (LLALAIPVILAQIAQTAMGFV), 53–73 (IWLPAILFGHGLLLALTPVIA), 93–113 (WLAGCVSVLIMFVLWNAGYII), 127–147 (AVGYLRALLWGAPGYLFFQVA), 160–180 (GMVIGFLGLLVNIPVNYIFIY), 188–208 (LGGVGCGVATAAVYWVMFIAM), 243–263 (LPIALALFFEVTLFAVVALLV), 276–296 (IALNFSSLMFVLPMSLAAAVT), 314–334 (AARTGLGVGVCMAVITAIFTV), 357–377 (LMLLAAVYQISDSIQVIGSGI), 387–407 (IFFITFTAYWVLGLPSGYILA), and 418–438 (PAGFWMGFIIGLTSAAIMMML).

This sequence belongs to the multi antimicrobial extrusion (MATE) (TC 2.A.66.1) family. MdtK subfamily.

It localises to the cell inner membrane. Multidrug efflux pump that functions probably as a Na(+)/drug antiporter. The sequence is that of Multidrug resistance protein MdtK from Citrobacter koseri (strain ATCC BAA-895 / CDC 4225-83 / SGSC4696).